A 282-amino-acid polypeptide reads, in one-letter code: Pantothenate synthetase (282 aa).

Methionine 30 to histidine 37 serves as a coordination point for ATP. Histidine 37 (proton donor) is an active-site residue. Glutamine 61 contributes to the (R)-pantoate binding site. Residue glutamine 61 coordinates beta-alanine. Position 147–150 (glycine 147–aspartate 150) interacts with ATP. Position 153 (glutamine 153) interacts with (R)-pantoate. ATP contacts are provided by residues valine 176 and lysine 184 to arginine 187.

The protein belongs to the pantothenate synthetase family. Homodimer.

It localises to the cytoplasm. It carries out the reaction (R)-pantoate + beta-alanine + ATP = (R)-pantothenate + AMP + diphosphate + H(+). Its pathway is cofactor biosynthesis; (R)-pantothenate biosynthesis; (R)-pantothenate from (R)-pantoate and beta-alanine: step 1/1. Its function is as follows. Catalyzes the condensation of pantoate with beta-alanine in an ATP-dependent reaction via a pantoyl-adenylate intermediate. This is Pantothenate synthetase from Bacillus cytotoxicus (strain DSM 22905 / CIP 110041 / 391-98 / NVH 391-98).